The chain runs to 4262 residues: Polyketide synthase PksM (4262 aa).

The N-terminal hotdog fold 1 stretch occupies residues 1 to 114; that stretch reads MITEQLHISL…ADMHRKEQTA (114 aa). Positions 1–271 constitute a PKS/mFAS DH 1 domain; it reads MITEQLHISL…GKSVRNMSAF (271 aa). The active-site Proton acceptor; for dehydratase activity 1 is the His-18. The interval 129 to 271 is C-terminal hotdog fold 1; that stretch reads DRILNLDEIY…GKSVRNMSAF (143 aa). Asp-190 acts as the Proton donor; for dehydratase activity 1 in catalysis. In terms of domain architecture, Carrier 1 spans 293 to 367; the sequence is PAFEMYLRQL…ELAAHLADHY (75 aa). Ser-327 carries the post-translational modification O-(pantetheine 4'-phosphoryl)serine. A Ketosynthase family 3 (KS3) 1 domain is found at 393–831; that stretch reads GEDIAIIGMA…GSNAHLILEE (439 aa). Residues Cys-569, His-704, and His-744 each act as for beta-ketoacyl synthase 1 activity in the active site. Residues 1009-1135 are N-terminal hotdog fold 2; that stretch reads HPLVHRNTSD…GRAVISDEAE (127 aa). Residues 1009–1301 form the PKS/mFAS DH 2 domain; that stretch reads HPLVHRNTSD…MRALDGEQHS (293 aa). The Proton acceptor; for dehydratase activity 2 role is filled by His-1038. Positions 1149–1301 are C-terminal hotdog fold 2; the sequence is SLDTVTSEQC…MRALDGEQHS (153 aa). The active-site Proton donor; for dehydratase activity 2 is the Asp-1211. Residues 2188–2261 enclose the Carrier 2 domain; the sequence is EKSTEYMKKL…ALVEHFIKTK (74 aa). O-(pantetheine 4'-phosphoryl)serine is present on Ser-2222. The segment covering 2275-2291 has biased composition (polar residues); the sequence is VQQHTPAESRTQSSQKP. Residues 2275–2313 form a disordered region; it reads VQQHTPAESRTQSSQKPDQAAKRTRRFRKLGFSGEKETP. A Ketosynthase family 3 (KS3) 2 domain is found at 2319–2734; it reads SRDVAVIGIS…GSNAHIILEE (416 aa). Catalysis depends on for beta-ketoacyl synthase 2 activity residues Cys-2476, His-2611, and His-2651. A coiled-coil region spans residues 2750–2826; that stretch reads ALIVLSAKNM…DFIENKADSL (77 aa). One can recognise a Carrier 3 domain in the interval 3409–3486; the sequence is SIEKRLEHDL…ELISFFLTDH (78 aa). Ser-3446 carries the O-(pantetheine 4'-phosphoryl)serine modification. A Ketosynthase family 3 (KS3) 3 domain is found at 3529-3944; that stretch reads DEPIAIIGMS…GTNAHAVIEE (416 aa). Active-site for beta-ketoacyl synthase 3 activity residues include Cys-3690, His-3825, and His-3865. Residues 4004–4033 are a coiled coil; sequence KAMEARLAIVANNQEQLVRKLKEYVEAMKN. In terms of domain architecture, Carrier 4 spans 4135–4212; sequence NGKTHIQKII…ALSDHLALKA (78 aa). Ser-4172 bears the O-(pantetheine 4'-phosphoryl)serine mark.

The cofactor is pantetheine 4'-phosphate.

The protein localises to the cytoplasm. It participates in antibiotic biosynthesis; bacillaene biosynthesis. In terms of biological role, involved in some intermediate steps for the synthesis of the antibiotic polyketide bacillaene which is involved in secondary metabolism. The protein is Polyketide synthase PksM (pksM) of Bacillus subtilis (strain 168).